The primary structure comprises 194 residues: Lytic chitin monooxygenase (194 aa).

The signal sequence occupies residues 1-28 (MKKSLLTIVLAFSFVLGGAALAPTVSEA). Cu cation is bound by residues histidine 29 and histidine 114. Residues 29–191 (HGYVASPGSR…VNAFYQAIDV (163 aa)) form the Chitin-binding type-4 domain.

Requires Cu(2+) as cofactor.

Its subcellular location is the secreted. The catalysed reaction is [(1-&gt;4)-N-acetyl-beta-D-glucosaminyl]n+m + reduced acceptor + O2 = [(1-&gt;4)-N-acetyl-beta-D-glucosaminyl]m-1-(1-&gt;4)-2-(acetylamino)-2-deoxy-D-glucono-1,5-lactone + [(1-&gt;4)-N-acetyl-beta-D-glucosaminyl]n + acceptor + H2O.. The protein operates within glycan degradation; chitin degradation. In terms of biological role, involved in chitin degradation. Catalyzes the oxidative cleavage of glycosidic bonds in both alpha- and beta-chitin via a copper-dependent mechanism, leading to oxidized chitooligosaccharides with a dominance of even-numbered products. Acts synergistically with the chitinase EfChi18A, and combining the two enzymes leads to rapid and complete depolymerization of crystalline chitin, especially with beta-chitin as a substrate. Is likely involved in a chitin degradation pathway that allows E.faecalis V583 to grow on chitin as a carbon source. The sequence is that of Lytic chitin monooxygenase from Enterococcus faecalis (strain ATCC 700802 / V583).